The chain runs to 120 residues: Large ribosomal subunit protein uL18 (120 aa).

Positions 1–20 (MKSTRKSATQRRHRRLRRHL) are enriched in basic residues. A disordered region spans residues 1–26 (MKSTRKSATQRRHRRLRRHLSGTSER).

It belongs to the universal ribosomal protein uL18 family. Part of the 50S ribosomal subunit; part of the 5S rRNA/L5/L18/L25 subcomplex. Contacts the 5S and 23S rRNAs.

In terms of biological role, this is one of the proteins that bind and probably mediate the attachment of the 5S RNA into the large ribosomal subunit, where it forms part of the central protuberance. This is Large ribosomal subunit protein uL18 from Synechocystis sp. (strain ATCC 27184 / PCC 6803 / Kazusa).